Here is a 197-residue protein sequence, read N- to C-terminus: MKIGYARVSTGLQNLNLQEDRLNAYGSEKIFSDHISGSKSKRPGLDKAIEFARSGDTIVVWRLDRLGRNMEDLITLVNELNERGVSFHSLEENITMDKSTSTGQLLFHLFAAFAEFERNLILERSSAGRIAARARGRYGGRPEKLNQKDLNLLKTLYDNGTPIKTIAEQWQVSRTTIYRYLNKLEEKEDEKQGEVSN.

Positions 1-136 constitute a Resolvase/invertase-type recombinase catalytic domain; the sequence is MKIGYARVST…AGRIAARARG (136 aa). The active-site O-(5'-phospho-DNA)-serine intermediate is the serine 9. Positions 163-182 form a DNA-binding region, H-T-H motif; the sequence is IKTIAEQWQVSRTTIYRYLN.

The protein belongs to the site-specific recombinase resolvase family.

Resolvase catalyzes the resolution (a site-specific recombination) of the cointegrated replicon to yield the final transposition products. The chain is Transposon Tn552 resolvase (tnpR) from Staphylococcus aureus.